Consider the following 398-residue polypeptide: Nicotinate phosphoribosyltransferase (398 aa).

Residue His222 is modified to Phosphohistidine; by autocatalysis.

It belongs to the NAPRTase family. In terms of processing, transiently phosphorylated on a His residue during the reaction cycle. Phosphorylation strongly increases the affinity for substrates and increases the rate of nicotinate D-ribonucleotide production. Dephosphorylation regenerates the low-affinity form of the enzyme, leading to product release.

It catalyses the reaction nicotinate + 5-phospho-alpha-D-ribose 1-diphosphate + ATP + H2O = nicotinate beta-D-ribonucleotide + ADP + phosphate + diphosphate. It participates in cofactor biosynthesis; NAD(+) biosynthesis; nicotinate D-ribonucleotide from nicotinate: step 1/1. Its function is as follows. Catalyzes the synthesis of beta-nicotinate D-ribonucleotide from nicotinate and 5-phospho-D-ribose 1-phosphate at the expense of ATP. This Acidovorax ebreus (strain TPSY) (Diaphorobacter sp. (strain TPSY)) protein is Nicotinate phosphoribosyltransferase.